The following is an 861-amino-acid chain: Probable beta-glucosidase A (861 aa).

The signal sequence occupies residues 1–19 (MKLSILEAAALTAASVVSA). N-linked (GlcNAc...) asparagine glycosylation is found at asparagine 62, asparagine 212, and asparagine 253. Residue aspartate 281 is part of the active site. 8 N-linked (GlcNAc...) asparagine glycosylation sites follow: asparagine 316, asparagine 323, asparagine 355, asparagine 524, asparagine 543, asparagine 565, asparagine 669, and asparagine 713. The disordered stretch occupies residues 735–754 (PEGATDGSPQPRLPASGGPG).

It belongs to the glycosyl hydrolase 3 family.

Its subcellular location is the secreted. The catalysed reaction is Hydrolysis of terminal, non-reducing beta-D-glucosyl residues with release of beta-D-glucose.. The protein operates within glycan metabolism; cellulose degradation. Beta-glucosidases are one of a number of cellulolytic enzymes involved in the degradation of cellulosic biomass. Catalyzes the last step releasing glucose from the inhibitory cellobiose. The protein is Probable beta-glucosidase A (bglA) of Aspergillus terreus (strain NIH 2624 / FGSC A1156).